The following is a 283-amino-acid chain: Ribosomal RNA small subunit methyltransferase A (283 aa).

The S-adenosyl-L-methionine site is built by Asn22, Leu24, Gly49, Glu70, and Asn113.

The protein belongs to the class I-like SAM-binding methyltransferase superfamily. rRNA adenine N(6)-methyltransferase family. RsmA subfamily.

The protein resides in the cytoplasm. It catalyses the reaction adenosine(1518)/adenosine(1519) in 16S rRNA + 4 S-adenosyl-L-methionine = N(6)-dimethyladenosine(1518)/N(6)-dimethyladenosine(1519) in 16S rRNA + 4 S-adenosyl-L-homocysteine + 4 H(+). In terms of biological role, specifically dimethylates two adjacent adenosines (A1518 and A1519) in the loop of a conserved hairpin near the 3'-end of 16S rRNA in the 30S particle. May play a critical role in biogenesis of 30S subunits. This is Ribosomal RNA small subunit methyltransferase A from Myxococcus xanthus (strain DK1622).